The sequence spans 860 residues: Leucine--tRNA ligase (860 aa).

The 'HIGH' region signature appears at 42–52 (PYPSGRLHMGH). The short motif at 619–623 (KMSKS) is the 'KMSKS' region element. Position 622 (Lys-622) interacts with ATP.

The protein belongs to the class-I aminoacyl-tRNA synthetase family.

The protein localises to the cytoplasm. The enzyme catalyses tRNA(Leu) + L-leucine + ATP = L-leucyl-tRNA(Leu) + AMP + diphosphate. This chain is Leucine--tRNA ligase, found in Pasteurella multocida (strain Pm70).